The following is a 141-amino-acid chain: Large ribosomal subunit protein bL17 (141 aa).

The protein belongs to the bacterial ribosomal protein bL17 family. In terms of assembly, part of the 50S ribosomal subunit. Contacts protein L32.

This is Large ribosomal subunit protein bL17 from Bartonella bacilliformis (strain ATCC 35685 / KC583 / Herrer 020/F12,63).